The primary structure comprises 854 residues: Iron and copper transporter IacT (854 aa).

Residues 187 to 194 (IELIVTAQ) carry the TonB box motif. One can recognise a TBDR plug domain in the interval 199 to 315 (DAQDVPLSLT…PAGVVNVISR (117 aa)). In terms of domain architecture, TBDR beta-barrel spans 320 to 854 (QPEMRISALY…TYGVRVSASF (535 aa)). The TonB C-terminal box signature appears at 839–854 (GFGDPVTYGVRVSASF).

Belongs to the TonB-dependent receptor family.

Its subcellular location is the cell outer membrane. In terms of biological role, involved in the TonB-dependent uptake of copper and iron under conditions in which the concentration of copper exceeds that of the iron. In Nostoc sp. (strain PCC 7120 / SAG 25.82 / UTEX 2576), this protein is Iron and copper transporter IacT.